Reading from the N-terminus, the 100-residue chain is MSTIPVTIDFSGGAEFLVKAKAQKVQIPADSTLRDVLKFVRDNLVTDVHRINMLLNDDASEVAHGVITLINDTDTGLLLEYDTVIEAGDTITFVSTLHGG.

Glycine 100 is subject to 1-thioglycine. Glycine 100 is covalently cross-linked (Glycyl lysine isopeptide (Gly-Lys) (interchain with K-? in acceptor proteins)).

Belongs to the URM1 family. In terms of processing, C-terminal thiocarboxylation occurs in 2 steps, it is first acyl-adenylated (-COAMP) via the hesA/moeB/thiF part of the MOCS3 homolog, then thiocarboxylated (-COSH) via the rhodanese domain of the MOCS3 homolog.

The protein resides in the cytoplasm. Its pathway is tRNA modification; 5-methoxycarbonylmethyl-2-thiouridine-tRNA biosynthesis. Functionally, acts as a sulfur carrier required for 2-thiolation of mcm(5)S(2)U at tRNA wobble positions of cytosolic tRNA(Lys), tRNA(Glu) and tRNA(Gln). Serves as sulfur donor in tRNA 2-thiolation reaction by being thiocarboxylated (-COSH) at its C-terminus by MOCS3. The sulfur is then transferred to tRNA to form 2-thiolation of mcm(5)S(2)U. Also acts as a ubiquitin-like protein (UBL) that is covalently conjugated via an isopeptide bond to lysine residues of target proteins. The thiocarboxylated form serves as substrate for conjugation and oxidative stress specifically induces the formation of UBL-protein conjugates. The chain is Ubiquitin-related modifier 1 homolog from Caenorhabditis elegans.